We begin with the raw amino-acid sequence, 809 residues long: TLR4 interactor with leucine rich repeats (809 aa).

An N-terminal signal peptide occupies residues 1–25 (MEGVGAVRFWLVVCGCLAFPPRAES). An LRRNT domain is found at 26-57 (VCPERCDCQHPQHLLCTNRGLRAVPKTSSLPS). At 26 to 694 (VCPERCDCQH…AGGRGGVDYQ (669 aa)) the chain is on the extracellular side. LRR repeat units lie at residues 61–81 (VLTY…DFHR), 84–105 (QLRR…TFEK), 108–129 (RLEE…TLAP), 132–153 (KLRI…SFEG), 156–177 (SLVK…VFAP), 180–201 (NLLY…AFSQ), 204–223 (KLRF…RHAA), 230–251 (SLST…VFQH), 254–275 (RLGL…AFWG), 278–298 (ALRE…TLLE), 302–323 (SLEA…TFGH), and 326–347 (RLRE…IFAA). The N-linked (GlcNAc...) asparagine glycan is linked to Asn73. Residues 359–416 (NGWTCDCRLRGLKRWMGNWHSQGRLLTVFVQCRHPPALRGKYLDYLDDQLLQNGSCVD) form the LRRCT domain. An N-linked (GlcNAc...) asparagine glycan is attached at Asn411. Disordered regions lie at residues 412-462 (GSCV…RGRL) and 483-563 (RLSR…SAVQ). Residues 421–436 (PTAGSRQWPLPTSSEE) are compositionally biased toward polar residues. A compositionally biased stretch (low complexity) spans 488–506 (GPGPHQGPSAAAPGSAPQS). The span at 521 to 543 (ANLSQTEPTPTSEPASGTPSARD) shows a compositional bias: polar residues. Positions 554–563 (ASEQQESAVQ) are enriched in low complexity. Asn587 carries N-linked (GlcNAc...) asparagine glycosylation. The helical transmembrane segment at 695–715 (LLTLVLLAVNALLVLLALAAW) threads the bilayer. Residues 716–809 (GSRWLRRKLR…EDHLLQRFAD (94 aa)) are Cytoplasmic-facing. Ser796 bears the Phosphoserine mark.

Belongs to the lipopolysaccharide (LPS) receptor, a multi-protein complex containing at least CD14, MD-2 and TLR4. Interacts with TLR4; this interaction is greatly enhanced by LPS stimulation. Interacts with LPS. Post-translationally, N-glycolysaled. As to expression, highly expressed in brain, spinal cord and lung.

It localises to the membrane. In terms of biological role, component of the TLR4 signaling complex. Mediates the innate immune response to bacterial lipopolysaccharide (LPS) leading to cytokine secretion. The sequence is that of TLR4 interactor with leucine rich repeats (Tril) from Mus musculus (Mouse).